The primary structure comprises 91 residues: Transcription factor znf27 (91 aa).

It is found in the nucleus. Transcription factor; part of the gene cluster 27 that mediates the biosynthesis of asparasone A, a sclerotium-specific anthraquinone pigment important for sclerotial survival. Controls the expression of the non-reducing polyketide synthase (NRPKS) pks27. The protein is Transcription factor znf27 of Aspergillus flavus (strain ATCC 200026 / FGSC A1120 / IAM 13836 / NRRL 3357 / JCM 12722 / SRRC 167).